We begin with the raw amino-acid sequence, 370 residues long: Biotin synthase (370 aa).

One can recognise a Radical SAM core domain in the interval 56–283; that stretch reads NAVQVSTLLS…KSHVRLSAGR (228 aa). C71, C75, and C78 together coordinate [4Fe-4S] cluster. 4 residues coordinate [2Fe-2S] cluster: C115, C146, C206, and R278. Over residues 327 to 344 the composition is skewed to basic and acidic residues; the sequence is GLHPEPSDPHADDAHRDD. Positions 327-346 are disordered; the sequence is GLHPEPSDPHADDAHRDDEQ.

It belongs to the radical SAM superfamily. Biotin synthase family. In terms of assembly, homodimer. [4Fe-4S] cluster is required as a cofactor. It depends on [2Fe-2S] cluster as a cofactor.

It carries out the reaction (4R,5S)-dethiobiotin + (sulfur carrier)-SH + 2 reduced [2Fe-2S]-[ferredoxin] + 2 S-adenosyl-L-methionine = (sulfur carrier)-H + biotin + 2 5'-deoxyadenosine + 2 L-methionine + 2 oxidized [2Fe-2S]-[ferredoxin]. It participates in cofactor biosynthesis; biotin biosynthesis; biotin from 7,8-diaminononanoate: step 2/2. Its function is as follows. Catalyzes the conversion of dethiobiotin (DTB) to biotin by the insertion of a sulfur atom into dethiobiotin via a radical-based mechanism. In Chromohalobacter salexigens (strain ATCC BAA-138 / DSM 3043 / CIP 106854 / NCIMB 13768 / 1H11), this protein is Biotin synthase.